The sequence spans 436 residues: tRNA(Ile)-lysidine synthase (436 aa).

Residue 21-26 (SGGVDS) participates in ATP binding.

It belongs to the tRNA(Ile)-lysidine synthase family.

It localises to the cytoplasm. The enzyme catalyses cytidine(34) in tRNA(Ile2) + L-lysine + ATP = lysidine(34) in tRNA(Ile2) + AMP + diphosphate + H(+). Its function is as follows. Ligates lysine onto the cytidine present at position 34 of the AUA codon-specific tRNA(Ile) that contains the anticodon CAU, in an ATP-dependent manner. Cytidine is converted to lysidine, thus changing the amino acid specificity of the tRNA from methionine to isoleucine. In Aster yellows witches'-broom phytoplasma (strain AYWB), this protein is tRNA(Ile)-lysidine synthase.